The chain runs to 245 residues: NAD(P)H-hydrate epimerase (245 aa).

Residues 16–224 enclose the YjeF N-terminal domain; that stretch reads AAALDAELMA…HIADKYDLEV (209 aa). (6S)-NADPHX is bound at residue 68–72; sequence NNGGD. Positions 69 and 131 each coordinate K(+). Residues 135–141 and aspartate 164 contribute to the (6S)-NADPHX site; that span reads GFSFKPP. K(+) is bound at residue serine 167.

Belongs to the NnrE/AIBP family. It depends on K(+) as a cofactor.

Its subcellular location is the cytoplasm. The protein resides in the mitochondrion. It catalyses the reaction (6R)-NADHX = (6S)-NADHX. It carries out the reaction (6R)-NADPHX = (6S)-NADPHX. Functionally, catalyzes the epimerization of the S- and R-forms of NAD(P)HX, a damaged form of NAD(P)H that is a result of enzymatic or heat-dependent hydration. This is a prerequisite for the S-specific NAD(P)H-hydrate dehydratase to allow the repair of both epimers of NAD(P)HX. This chain is NAD(P)H-hydrate epimerase, found in Yarrowia lipolytica (strain CLIB 122 / E 150) (Yeast).